Consider the following 154-residue polypeptide: Peptide deformylase (154 aa).

Fe cation contacts are provided by C90 and H132. E133 is a catalytic residue. H136 provides a ligand contact to Fe cation.

The protein belongs to the polypeptide deformylase family. Fe(2+) is required as a cofactor.

The enzyme catalyses N-terminal N-formyl-L-methionyl-[peptide] + H2O = N-terminal L-methionyl-[peptide] + formate. Functionally, removes the formyl group from the N-terminal Met of newly synthesized proteins. Requires at least a dipeptide for an efficient rate of reaction. N-terminal L-methionine is a prerequisite for activity but the enzyme has broad specificity at other positions. The protein is Peptide deformylase of Desulforudis audaxviator (strain MP104C).